Reading from the N-terminus, the 282-residue chain is DNA-dependent metalloprotease WSS1 homolog 2 (282 aa).

The region spanning 1-75 (MELKFSCRGN…CLIRQDKDIV (75 aa)) is the Ubiquitin-like domain. Residues 99-274 (PHTTPKPASI…LLAAAERRKQ (176 aa)) enclose the WLM domain. Residue His202 coordinates Zn(2+). Glu203 is a catalytic residue. Positions 206 and 212 each coordinate Zn(2+). The tract at residues 234 to 282 (GKPGSYVSDRASYTPQQDNDDEDQKNHRRDLLLAAAERRKQSGSKVQKE) is disordered. Basic and acidic residues predominate over residues 269–282 (AERRKQSGSKVQKE).

It belongs to the peptidase M3 family. WSS1-like metalloprotease (WLM) subfamily. It depends on Zn(2+) as a cofactor.

Its subcellular location is the cytoplasm. It localises to the nucleus. In terms of biological role, metalloendopeptidase that acts selectively on DNA-binding proteins. DNA is needed to bring the protease and substrates together to enable proteolysis. Involved in the repair of toxic DNA-protein cross-links (DPCs) such as covalently trapped topoisomerase 1 (TOP1) adducts on DNA lesions or DPCs induced by reactive compounds such as formaldehyde. The chain is DNA-dependent metalloprotease WSS1 homolog 2 from Schizosaccharomyces pombe (strain 972 / ATCC 24843) (Fission yeast).